The sequence spans 52 residues: MFNVRVNVTLACTECGDRNYITTKNKRNNPERIEMKKYCPRLNKYTLHRETK.

This sequence belongs to the bacterial ribosomal protein bL33 family.

The sequence is that of Large ribosomal subunit protein bL33A from Staphylococcus aureus (strain USA300).